Reading from the N-terminus, the 752-residue chain is Microtubule-associated protein tau (752 aa).

The segment at 1–567 (MAEPRQEFDT…PVPMPDLKNV (567 aa)) is disordered. A2 carries the N-acetylalanine modification. Y18 carries the post-translational modification Phosphotyrosine. A Glycyl lysine isopeptide (Lys-Gly) (interchain with G-Cter in ubiquitin) cross-link involves residue K33. S35 and S50 each carry phosphoserine. The span at 50–60 (SETSDAKSTPT) shows a compositional bias: polar residues. Residues T58, T60, and T100 each carry the phosphothreonine modification. Polar residues predominate over residues 142-151 (SDWTHQQVPS). Residues 173–182 (RPEDVERSHP) are compositionally biased toward basic and acidic residues. S191 and S204 each carry phosphoserine. The span at 192 to 204 (PQKEAWGKDRLGS) shows a compositional bias: basic and acidic residues. Acidic residues predominate over residues 205–218 (EEEVDEDITMDESS). Residues 219–229 (QESPPSQASLA) show a composition bias toward low complexity. Positions 233–252 (ATPQARSVSASGVSGETTSI) are enriched in polar residues. Basic and acidic residues-rich tracts occupy residues 289-313 (EEGH…KEQD) and 374-385 (SKDRTGNDEKKA). Composition is skewed to polar residues over residues 387–400 (TSTP…SNRP) and 432–446 (KYVS…SPGT). The residue at position 464 (T464) is a Phosphothreonine. R466 is subject to Omega-N-methylarginine. N6,N6-dimethyllysine; alternate is present on K474. K474 carries the post-translational modification N6-acetyllysine; alternate. T480, T486, and T487 each carry phosphothreonine. Phosphoserine is present on S489. T492 carries the post-translational modification Phosphothreonine. A phosphoserine mark is found at S496, S502, and S506. Positions 498-525 (EPPKSGERSGYSSPGSPGTPGSRSRTPS) are enriched in low complexity. A Phosphotyrosine modification is found at Y508. Phosphoserine is present on residues S509 and S510. Position 513 is a phosphoserine; by CK1, PDPK1 and TTBK1 (S513). A phosphothreonine mark is found at T516 and T523. S525 carries the post-translational modification Phosphoserine. T528 is subject to Phosphothreonine. Residue K536 is modified to N6-acetyllysine. A Phosphothreonine modification is found at T542. Phosphoserine is present on residues S546 and S548. Tau/MAP repeat units lie at residues 555-585 (QTAP…GGGK), 586-616 (VQII…GGGS), 617-647 (VHIV…GGGQ), and 648-679 (VEVK…GGGN). K565 participates in a covalent cross-link: Glycyl lysine isopeptide (Lys-Gly) (interchain with G-Cter in ubiquitin). N6-acetyllysine; alternate is present on K570. K570 is subject to N6-methyllysine; alternate. A Glycyl lysine isopeptide (Lys-Gly) (interchain with G-Cter in ubiquitin); alternate cross-link involves residue K570. At S573 the chain carries Phosphoserine. A Glycyl lysine isopeptide (Lys-Gly) (interchain with G-Cter in ubiquitin) cross-link involves residue K578. An N6-acetyllysine; alternate modification is found at K592. A Glycyl lysine isopeptide (Lys-Gly) (interchain with G-Cter in ubiquitin); alternate cross-link involves residue K592. Phosphoserine occurs at positions 596 and 600. An N6-acetyllysine modification is found at K601. A disulfide bond links C602 and C633. S604 bears the Phosphoserine mark. N6-acetyllysine; alternate is present on K609. K609 is covalently cross-linked (Glycyl lysine isopeptide (Lys-Gly) (interchain with G-Cter in ubiquitin); alternate). Residue S616 is modified to Phosphoserine. The residue at position 622 (K622) is an N6,N6-dimethyllysine; alternate. Residues K622, K628, and K632 each carry the N6-acetyllysine; alternate modification. Glycyl lysine isopeptide (Lys-Gly) (interchain with G-Cter in ubiquitin); alternate cross-links involve residues K622, K628, and K632. S635 carries the phosphoserine modification. N6-acetyllysine; alternate occurs at positions 642, 654, and 658. Residues K642, K654, and K658 each participate in a glycyl lysine isopeptide (Lys-Gly) (interchain with G-Cter in ubiquitin); alternate cross-link. R660 is modified (omega-N-methylarginine). Phosphoserine is present on S663. Residue K664 forms a Glycyl lysine isopeptide (Lys-Gly) (interchain with G-Cter in ubiquitin) linkage. Phosphoserine is present on S667. Position 680 is an N6-acetyllysine; alternate (K680). K680 participates in a covalent cross-link: Glycyl lysine isopeptide (Lys-Gly) (interchain with G-Cter in ubiquitin); alternate. K686 is covalently cross-linked (Glycyl lysine isopeptide (Lys-Gly) (interchain with G-Cter in ubiquitin)). K696 carries the post-translational modification N6-acetyllysine; alternate. Residue K696 forms a Glycyl lysine isopeptide (Lys-Gly) (interchain with G-Cter in ubiquitin); alternate linkage. Y705 is modified (phosphotyrosine). S707 carries the phosphoserine; by CK1 and PDPK1 modification. The residue at position 711 (S711) is a Phosphoserine. Position 714 is a phosphothreonine (T714). Phosphoserine; by CK1 and PDPK1 is present on S715. S720, S727, and S733 each carry phosphoserine. T738 carries the post-translational modification Phosphothreonine.

As to quaternary structure, interacts with MARK1, MARK2, MARK3 and MARK4. Interacts with SQSTM1 when polyubiquitinated. Interacts with PSMC2 through SQSTM1. Interacts with FKBP4. Binds to CSNK1D. Interacts with SGK1. Interacts with EPM2A; the interaction dephosphorylates MAPT at Ser-388. Interacts with PIN1. Interacts with LRRK2. Interacts with LRP1, leading to endocytosis; this interaction is reduced in the presence of LRPAP1/RAP. Post-translationally, polyubiquitinated. Requires functional TRAF6 and may provoke SQSTM1-dependent degradation by the proteasome. Phosphorylated at various serine and threonine residues in S-P or T-P motifs by proline-directed protein kinases (PDPK1, CDK1, CDK5, GSK3, MAPK) (a few sites per protein in interphase, more in mitosis), and at serine residues in K-X-G-S motifs by MAP/microtubule affinity-regulating kinase (MARK1, MARK2, MARK3, MARK4), causing detachment from microtubules, and their disassembly. Fetal Tau is much more phosphorylated than adult Tau. Phosphorylation at Ser-573 by BRSK1 and BRSK2 in neurons affects ability to bind microtubules and plays a role in neuron polarization. Phosphorylated by PHK. Dephosphorylation at several serine and threonine residues by the serine/threonine phosphatase PPP5C. Phosphorylation at Ser-204 by SGK1 mediates microtubule depolymerization and neurite formation in hippocampal neurons. In terms of tissue distribution, expressed in neurons. The larger forms (isoform tau-A and isoform tau-B) are preferentially expressed in the peripheral nervous system while the other are expressed in the central nervous system. Low amounts of the larger forms are also found in limited areas of the CNS.

Its subcellular location is the cytoplasm. The protein resides in the cytosol. It is found in the cell membrane. The protein localises to the cytoskeleton. It localises to the cell projection. Its subcellular location is the axon. The protein resides in the dendrite. It is found in the secreted. Functionally, promotes microtubule assembly and stability, and might be involved in the establishment and maintenance of neuronal polarity. The C-terminus binds axonal microtubules while the N-terminus binds neural plasma membrane components, suggesting that tau functions as a linker protein between both. Axonal polarity is predetermined by tau localization (in the neuronal cell) in the domain of the cell body defined by the centrosome. The short isoforms allow plasticity of the cytoskeleton whereas the longer isoforms may preferentially play a role in its stabilization. This chain is Microtubule-associated protein tau, found in Rattus norvegicus (Rat).